Here is a 101-residue protein sequence, read N- to C-terminus: NADH-quinone oxidoreductase subunit K (101 aa).

Transmembrane regions (helical) follow at residues 4-24, 30-50, and 61-81; these read LAHY…GIFL, IVLL…FVAF, and VFVF…LAIL.

Belongs to the complex I subunit 4L family. In terms of assembly, NDH-1 is composed of 14 different subunits. Subunits NuoA, H, J, K, L, M, N constitute the membrane sector of the complex.

The protein resides in the cell inner membrane. It catalyses the reaction a quinone + NADH + 5 H(+)(in) = a quinol + NAD(+) + 4 H(+)(out). In terms of biological role, NDH-1 shuttles electrons from NADH, via FMN and iron-sulfur (Fe-S) centers, to quinones in the respiratory chain. The immediate electron acceptor for the enzyme in this species is believed to be ubiquinone. Couples the redox reaction to proton translocation (for every two electrons transferred, four hydrogen ions are translocated across the cytoplasmic membrane), and thus conserves the redox energy in a proton gradient. This Ralstonia nicotianae (strain ATCC BAA-1114 / GMI1000) (Ralstonia solanacearum) protein is NADH-quinone oxidoreductase subunit K.